Here is a 132-residue protein sequence, read N- to C-terminus: Holo-[acyl-carrier-protein] synthase (132 aa).

Positions 8 and 62 each coordinate Mg(2+).

Belongs to the P-Pant transferase superfamily. AcpS family. It depends on Mg(2+) as a cofactor.

The protein resides in the cytoplasm. It catalyses the reaction apo-[ACP] + CoA = holo-[ACP] + adenosine 3',5'-bisphosphate + H(+). Functionally, transfers the 4'-phosphopantetheine moiety from coenzyme A to a Ser of acyl-carrier-protein. This Leptothrix cholodnii (strain ATCC 51168 / LMG 8142 / SP-6) (Leptothrix discophora (strain SP-6)) protein is Holo-[acyl-carrier-protein] synthase.